We begin with the raw amino-acid sequence, 190 residues long: Elongation factor P 2 (190 aa).

This sequence belongs to the elongation factor P family.

Its subcellular location is the cytoplasm. It functions in the pathway protein biosynthesis; polypeptide chain elongation. Functionally, involved in peptide bond synthesis. Stimulates efficient translation and peptide-bond synthesis on native or reconstituted 70S ribosomes in vitro. Probably functions indirectly by altering the affinity of the ribosome for aminoacyl-tRNA, thus increasing their reactivity as acceptors for peptidyl transferase. The protein is Elongation factor P 2 (efp2) of Chlamydia trachomatis serovar D (strain ATCC VR-885 / DSM 19411 / UW-3/Cx).